The primary structure comprises 235 residues: uncharacterized protein (235 aa).

This is an uncharacterized protein from Mycoplasma pneumoniae (strain ATCC 29342 / M129 / Subtype 1) (Mycoplasmoides pneumoniae).